A 353-amino-acid chain; its full sequence is Uroporphyrinogen decarboxylase (353 aa).

Substrate is bound by residues 28–32 (RQAGR), aspartate 78, tyrosine 155, serine 210, and histidine 325.

It belongs to the uroporphyrinogen decarboxylase family. Homodimer.

Its subcellular location is the cytoplasm. The enzyme catalyses uroporphyrinogen III + 4 H(+) = coproporphyrinogen III + 4 CO2. The protein operates within porphyrin-containing compound metabolism; protoporphyrin-IX biosynthesis; coproporphyrinogen-III from 5-aminolevulinate: step 4/4. Its function is as follows. Catalyzes the decarboxylation of four acetate groups of uroporphyrinogen-III to yield coproporphyrinogen-III. The protein is Uroporphyrinogen decarboxylase of Nostoc punctiforme (strain ATCC 29133 / PCC 73102).